A 585-amino-acid chain; its full sequence is MARPDPSAPPSLLLLLLAQLVGRAAAASKAPVCQEITVPMCRGIGYNLTHMPNQFNHDTQDEAGLEVHQFWPLVEIHCSPDLRFFLCSMYTPICLPDYHKPLPPCRSVCERAKAGCSPLMRQYGFAWPERMSCDRLPVLGGDAEVLCMDYNRSEATTASPKSFPAKPTLPGPPGAPSSGGECPSGGPSVCTCREPFVPILKESHPLYNKVRTGQVPNCAVPCYQPSFSPDERTFATFWIGLWSVLCFISTSTTVATFLIDMERFRYPERPIIFLSACYLCVSLGFLVRLVVGHASVACSREHSHIHYETTGPALCTVVFLLVYFFGMASSIWWVILSLTWFLAAGMKWGNEAIAGYAQYFHLAAWLIPSVKSITALALSSVDGDPVAGICYVGNQNLNSLRGFVLGPLVLYLLVGTLFLLAGFVSLFRIRSVIKQGGTKTDKLEKLMIRIGIFTLLYTVPASIVVACYLYEQHYRESWEAALTCACPGPDAGQPRAKPEYWVLMLKYFMCLVVGITSGVWIWSGKTLESWRRFTSRCCCSSRRGHKSGGAMAAGDYAEASAALTGRTGPPGPTAAYHKQVSLSHV.

A signal peptide spans 1–26; sequence MARPDPSAPPSLLLLLLAQLVGRAAA. Residues 27-238 are Extracellular-facing; that stretch reads ASKAPVCQEI…PDERTFATFW (212 aa). In terms of domain architecture, FZ spans 28 to 150; the sequence is SKAPVCQEIT…GDAEVLCMDY (123 aa). 5 cysteine pairs are disulfide-bonded: Cys33–Cys94, Cys41–Cys87, Cys78–Cys116, Cys105–Cys147, and Cys109–Cys133. Residue Asn47 is glycosylated (N-linked (GlcNAc...) asparagine). A glycan (N-linked (GlcNAc...) asparagine) is linked at Asn151. Residues 156 to 182 are disordered; that stretch reads TTASPKSFPAKPTLPGPPGAPSSGGEC. Residues 239–259 traverse the membrane as a helical segment; the sequence is IGLWSVLCFISTSTTVATFLI. Over 260–270 the chain is Cytoplasmic; that stretch reads DMERFRYPERP. Residues 271-291 form a helical membrane-spanning segment; sequence IIFLSACYLCVSLGFLVRLVV. At 292–315 the chain is on the extracellular side; it reads GHASVACSREHSHIHYETTGPALC. Residues 316–336 form a helical membrane-spanning segment; sequence TVVFLLVYFFGMASSIWWVIL. The Cytoplasmic segment spans residues 337–358; that stretch reads SLTWFLAAGMKWGNEAIAGYAQ. The helical transmembrane segment at 359–379 threads the bilayer; it reads YFHLAAWLIPSVKSITALALS. Over 380–402 the chain is Extracellular; sequence SVDGDPVAGICYVGNQNLNSLRG. A helical membrane pass occupies residues 403 to 423; it reads FVLGPLVLYLLVGTLFLLAGF. Residues 424 to 449 are Cytoplasmic-facing; the sequence is VSLFRIRSVIKQGGTKTDKLEKLMIR. A helical membrane pass occupies residues 450-470; it reads IGIFTLLYTVPASIVVACYLY. The Extracellular portion of the chain corresponds to 471-500; the sequence is EQHYRESWEAALTCACPGPDAGQPRAKPEY. A helical membrane pass occupies residues 501 to 521; that stretch reads WVLMLKYFMCLVVGITSGVWI. The Cytoplasmic segment spans residues 522–585; the sequence is WSGKTLESWR…YHKQVSLSHV (64 aa). The PDZ-binding signature appears at 582–584; sequence LSH.

The protein belongs to the G-protein coupled receptor Fz/Smo family. In terms of assembly, binding of unsaturated fatty acid molecules (via FZ domain) promotes homodimerization (via FZ domain). Interacts with WNT2B. Interacts with WNT7A. Interacts with GOPC. In terms of processing, ubiquitinated by RNF43 and ZNRF3, leading to its degradation by the proteasome. Detected in hippocampus (at protein level). Expressed in eye, kidney, lung, chondrocytes, epithelial cells of the small intestine and gobelet cells of the colon.

Its subcellular location is the cell membrane. The protein resides in the golgi apparatus membrane. It localises to the synapse. The protein localises to the perikaryon. It is found in the cell projection. Its subcellular location is the dendrite. The protein resides in the axon. Functionally, receptor for Wnt proteins. Functions in the canonical Wnt/beta-catenin signaling pathway. In vitro activates WNT2, WNT10B, WNT5A, but not WNT2B or WNT4 signaling. In neurons, activation by WNT7A promotes formation of synapses. May be involved in transduction and intercellular transmission of polarity information during tissue morphogenesis and/or in differentiated tissues. Plays a role in yolk sac angiogenesis and in placental vascularization. Plays a role in ocular development. The sequence is that of Frizzled-5 (Fzd5) from Mus musculus (Mouse).